Here is a 430-residue protein sequence, read N- to C-terminus: Asparagine--tRNA ligase (430 aa).

This sequence belongs to the class-II aminoacyl-tRNA synthetase family. In terms of assembly, homodimer.

The protein resides in the cytoplasm. It catalyses the reaction tRNA(Asn) + L-asparagine + ATP = L-asparaginyl-tRNA(Asn) + AMP + diphosphate + H(+). The polypeptide is Asparagine--tRNA ligase (Pelotomaculum thermopropionicum (strain DSM 13744 / JCM 10971 / SI)).